Reading from the N-terminus, the 160-residue chain is Anaerobic nitrite reductase Glb1-1 (160 aa).

Residues 8–157 (GFTEEQEALV…LVNAIKSEMK (150 aa)) enclose the Globin domain. Residues 41–45 (EIAPS) carry the Homodimerization motif. Heme b contacts are provided by serine 51, lysine 65, histidine 69, lysine 99, and histidine 104. The Homodimerization signature appears at 111–123 (DEHFEVTKFALLE).

The protein belongs to the plant globin family. As to quaternary structure, homodimer. Heme b is required as a cofactor.

The enzyme catalyses Fe(III)-heme b-[protein] + nitric oxide + H2O = Fe(II)-heme b-[protein] + nitrite + 2 H(+). Functionally, phytoglobin that reduces nitrite to nitric oxide (NO) under anoxic conditions (e.g. during flooding or in waterlogged soil) and upon root nodulation. Required for general plant development and during nodulation, especially for the onset of symbiosis. Monitors nitric oxide (NO) levels during early phase of the nitrogen-fixing symbiosis and buffers oxygen in functioning nodules. May not function as an oxygen storage or transport protein. Has an unusually high affinity for O(2) through a hexacoordinate heme iron because of a very low dissociation constant. This is Anaerobic nitrite reductase Glb1-1 from Medicago truncatula (Barrel medic).